Reading from the N-terminus, the 317-residue chain is MMICYSPITTCSRNAISIKRHLGSRLYGVVAHGSSKFSCYSLLSGLSRRHYTGFRVSVSNRPSSWHDKGLFGSVLINRPTVAPKEKLEVSFLSPEANMKCSKIESNMRNLYCYSRFAYTGVIVSLLVCYSSTSQSAYADSSRDKDANNVHHHSSDGKFHNGKRVYTDYSIIGIPGDGRCLFRSVAHGFCLRSGKLAPGEKMQRELADELRTRVADEFIQRRQETEWFVEGDFDTYVRQIRDPHVWGGEPELFMASHVLQMPITVYMKDDKAGGLISIAEYGQEYGKDDPIRVLYHGFGHYDALLLHESKASIPKSKL.

The OTU domain occupies 168-306 (YSIIGIPGDG…FGHYDALLLH (139 aa)). Asp176 is an active-site residue. Cys179 (nucleophile) is an active-site residue. Residue His299 is part of the active site.

This sequence belongs to the peptidase C65 family.

It localises to the cytoplasm. The catalysed reaction is Thiol-dependent hydrolysis of ester, thioester, amide, peptide and isopeptide bonds formed by the C-terminal Gly of ubiquitin (a 76-residue protein attached to proteins as an intracellular targeting signal).. Functionally, hydrolase that can remove conjugated ubiquitin from proteins in vitro and may therefore play an important regulatory role at the level of protein turnover by preventing degradation. Cysteine protease with a preference for 'Lys-63' over 'Lys-48'-linked over 'Met-1' ubiquitin (UB) tetramers (e.g. Ub3 and Ub4) as substrates. Also cleaves RUB-GST fusion. The protein is OVARIAN TUMOR DOMAIN-containing deubiquitinating enzyme 4 of Arabidopsis thaliana (Mouse-ear cress).